Here is a 113-residue protein sequence, read N- to C-terminus: Iron-sulfur cluster insertion protein ErpA (113 aa).

Positions 41, 105, and 107 each coordinate iron-sulfur cluster.

Belongs to the HesB/IscA family. Homodimer. The cofactor is iron-sulfur cluster.

Required for insertion of 4Fe-4S clusters for at least IspG. This is Iron-sulfur cluster insertion protein ErpA from Actinobacillus pleuropneumoniae serotype 5b (strain L20).